A 252-amino-acid chain; its full sequence is Fluoroquinolones export permease protein MT2760 (252 aa).

Transmembrane regions (helical) follow at residues 31-51 (VMLVIAPVIWTTGVALLTPLF), 69-89 (LILTAFLLLTSIIVAGALAAF), 119-139 (ATVMVVTTIYVVATMSCSGIL), 148-168 (IPIGLVAGLSAVVTLLLILAV), 176-196 (LAMVRALGMLIAGLPCLPWFI), and 224-244 (TWWPYLVGGAVYNLAIVWVLF).

In terms of assembly, the complex is composed of 2 ATP-binding proteins and 2 transmembrane proteins.

It localises to the cell membrane. Its function is as follows. Part of the ABC transporter complex involved in fluoroquinolones export. Probably responsible for the translocation of the substrate across the membrane. This is Fluoroquinolones export permease protein MT2760 from Mycobacterium tuberculosis (strain CDC 1551 / Oshkosh).